A 325-amino-acid polypeptide reads, in one-letter code: Tetraacyldisaccharide 4'-kinase (325 aa).

55–62 is a binding site for ATP; that stretch reads TAGGNGKT.

It belongs to the LpxK family.

It catalyses the reaction a lipid A disaccharide + ATP = a lipid IVA + ADP + H(+). It functions in the pathway glycolipid biosynthesis; lipid IV(A) biosynthesis; lipid IV(A) from (3R)-3-hydroxytetradecanoyl-[acyl-carrier-protein] and UDP-N-acetyl-alpha-D-glucosamine: step 6/6. Functionally, transfers the gamma-phosphate of ATP to the 4'-position of a tetraacyldisaccharide 1-phosphate intermediate (termed DS-1-P) to form tetraacyldisaccharide 1,4'-bis-phosphate (lipid IVA). This Salmonella paratyphi A (strain ATCC 9150 / SARB42) protein is Tetraacyldisaccharide 4'-kinase.